The primary structure comprises 431 residues: Dihydroorotase (431 aa).

Positions 59 and 61 each coordinate Zn(2+). Residues 61–63 (HLR) and N93 each bind substrate. Residues D151, H178, H231, and D304 each contribute to the Zn(2+) site. D304 is a catalytic residue. Substrate contacts are provided by residues H308 and 322-323 (FG).

It belongs to the metallo-dependent hydrolases superfamily. DHOase family. Class I DHOase subfamily. Zn(2+) is required as a cofactor.

The enzyme catalyses (S)-dihydroorotate + H2O = N-carbamoyl-L-aspartate + H(+). Its pathway is pyrimidine metabolism; UMP biosynthesis via de novo pathway; (S)-dihydroorotate from bicarbonate: step 3/3. In terms of biological role, catalyzes the reversible cyclization of carbamoyl aspartate to dihydroorotate. The protein is Dihydroorotase of Thermoanaerobacter sp. (strain X514).